The primary structure comprises 182 residues: MVASIAGEEEPAAEKSQQSPDHFQPYRPYYYPPYRGYPITYPYPYPHGYPKPYHNFQTIAKPNEGPTDQPEANSANSIEEGGVSKRLFIEPIFNLFRPRPRDPIVVNQAPPPPPVIYQAPPPPPPPPIFQQAPPTIYQQPSPTIIQQAPQPSVTKLVYSQPEPSHSVIYQTQPKTELVYLNQ.

An N-terminal signal peptide occupies residues 1–7; sequence MVASIAG. Disordered stretches follow at residues 1-26, 56-79, and 104-136; these read MVAS…FQPY, FQTI…NSIE, and IVVN…PPTI. Residues 109-128 show a composition bias toward pro residues; sequence APPPPPVIYQAPPPPPPPPI.

As to expression, spermatophore.

The protein localises to the secreted. In terms of biological role, structural protein of a layer within the wall of the spermatophore produced probably by cell type 4 of the bean-shaped gland (BAG). Fixation in the spermatophore seems to require covalent cross-linking of spermatophorins. The chain is Spermatophorin SP23 (SP23) from Tenebrio molitor (Yellow mealworm beetle).